We begin with the raw amino-acid sequence, 156 residues long: Transcription elongation factor GreA (156 aa).

Positions 1–32 (MKKVRLTREGYEKLKKELEDLKRKFMYEISER) form a coiled coil.

This sequence belongs to the GreA/GreB family.

In terms of biological role, necessary for efficient RNA polymerase transcription elongation past template-encoded arresting sites. The arresting sites in DNA have the property of trapping a certain fraction of elongating RNA polymerases that pass through, resulting in locked ternary complexes. Cleavage of the nascent transcript by cleavage factors such as GreA or GreB allows the resumption of elongation from the new 3'terminus. GreA releases sequences of 2 to 3 nucleotides. The polypeptide is Transcription elongation factor GreA (Thermotoga petrophila (strain ATCC BAA-488 / DSM 13995 / JCM 10881 / RKU-1)).